The chain runs to 212 residues: Protein-L-isoaspartate O-methyltransferase (212 aa).

Ser61 is a catalytic residue.

Belongs to the methyltransferase superfamily. L-isoaspartyl/D-aspartyl protein methyltransferase family.

It localises to the cytoplasm. The catalysed reaction is [protein]-L-isoaspartate + S-adenosyl-L-methionine = [protein]-L-isoaspartate alpha-methyl ester + S-adenosyl-L-homocysteine. Functionally, catalyzes the methyl esterification of L-isoaspartyl residues in peptides and proteins that result from spontaneous decomposition of normal L-aspartyl and L-asparaginyl residues. It plays a role in the repair and/or degradation of damaged proteins. The chain is Protein-L-isoaspartate O-methyltransferase from Pseudoalteromonas atlantica (strain T6c / ATCC BAA-1087).